The primary structure comprises 239 residues: Ribosomal RNA small subunit methyltransferase G (239 aa).

S-adenosyl-L-methionine-binding positions include Gly-78, Phe-83, 129-130, and Arg-148; that span reads AE.

It belongs to the methyltransferase superfamily. RNA methyltransferase RsmG family.

The protein resides in the cytoplasm. Its function is as follows. Specifically methylates the N7 position of a guanine in 16S rRNA. This chain is Ribosomal RNA small subunit methyltransferase G, found in Clostridium botulinum (strain Eklund 17B / Type B).